Consider the following 565-residue polypeptide: Proline--tRNA ligase (565 aa).

Belongs to the class-II aminoacyl-tRNA synthetase family. ProS type 1 subfamily. As to quaternary structure, homodimer.

The protein resides in the cytoplasm. It carries out the reaction tRNA(Pro) + L-proline + ATP = L-prolyl-tRNA(Pro) + AMP + diphosphate. In terms of biological role, catalyzes the attachment of proline to tRNA(Pro) in a two-step reaction: proline is first activated by ATP to form Pro-AMP and then transferred to the acceptor end of tRNA(Pro). As ProRS can inadvertently accommodate and process non-cognate amino acids such as alanine and cysteine, to avoid such errors it has two additional distinct editing activities against alanine. One activity is designated as 'pretransfer' editing and involves the tRNA(Pro)-independent hydrolysis of activated Ala-AMP. The other activity is designated 'posttransfer' editing and involves deacylation of mischarged Ala-tRNA(Pro). The misacylated Cys-tRNA(Pro) is not edited by ProRS. The polypeptide is Proline--tRNA ligase (Francisella tularensis subsp. tularensis (strain FSC 198)).